The chain runs to 458 residues: Elongation factor 1-alpha 1 (458 aa).

Gly-2 carries the post-translational modification N,N,N-trimethylglycine. An N6,N6-dimethyllysine; alternate modification is found at Lys-3. Residue Lys-3 is modified to N6-methyllysine; alternate. The tr-type G domain maps to 5–240 (KTHVNVVVIG…DAIEPPTRPT (236 aa)). The G1 stretch occupies residues 14 to 21 (GHVDSGKS). 14–21 (GHVDSGKS) lines the GTP pocket. Lys-30 is subject to N6-methyllysine. A G2 region spans residues 70–74 (GITID). Residue Lys-79 is modified to N6,N6,N6-trimethyllysine. The segment at 91 to 94 (DAPG) is G3. GTP is bound by residues 91–95 (DAPGH) and 153–156 (NKMD). Residues 153–156 (NKMD) form a G4 region. The tract at residues 192–194 (SGW) is G5. N6,N6-dimethyllysine; alternate is present on Lys-316. At Lys-316 the chain carries N6-methyllysine; alternate. N6-methyllysine is present on Lys-390.

This sequence belongs to the TRAFAC class translation factor GTPase superfamily. Classic translation factor GTPase family. EF-Tu/EF-1A subfamily.

It is found in the cytoplasm. In terms of biological role, this protein promotes the GTP-dependent binding of aminoacyl-tRNA to the A-site of ribosomes during protein biosynthesis. This chain is Elongation factor 1-alpha 1 (TEF1), found in Candida albicans (strain SC5314 / ATCC MYA-2876) (Yeast).